Here is a 3096-residue protein sequence, read N- to C-terminus: Cilia- and flagella-associated protein 54 (3096 aa).

The span at 1–45 (MAAQGSPSSSPSDDSTTSGSLPELPPTSTATSRSPPESKGSSRSS) shows a compositional bias: low complexity. 2 disordered regions span residues 1 to 46 (MAAQ…RSSL) and 1248 to 1267 (SNEQEEMPEEDSSKKSLKTK).

Belongs to the CFAP54 family.

The protein resides in the cytoplasm. The protein localises to the cytoskeleton. Its subcellular location is the cilium axoneme. Functionally, required for assembly and function of cilia and flagella. This is Cilia- and flagella-associated protein 54 from Homo sapiens (Human).